Consider the following 311-residue polypeptide: Probable manganese-dependent inorganic pyrophosphatase (311 aa).

Residues H9, D13, D15, D75, H97, and D149 each contribute to the Mn(2+) site.

The protein belongs to the PPase class C family. The cofactor is Mn(2+).

The protein localises to the cytoplasm. The catalysed reaction is diphosphate + H2O = 2 phosphate + H(+). In Lactobacillus gasseri (strain ATCC 33323 / DSM 20243 / BCRC 14619 / CIP 102991 / JCM 1131 / KCTC 3163 / NCIMB 11718 / NCTC 13722 / AM63), this protein is Probable manganese-dependent inorganic pyrophosphatase.